A 140-amino-acid chain; its full sequence is Trafficking protein particle complex subunit 2-like protein (140 aa).

The protein belongs to the TRAPP small subunits family. Sedlin subfamily.

This is Trafficking protein particle complex subunit 2-like protein (trappc2l) from Dictyostelium discoideum (Social amoeba).